A 419-amino-acid chain; its full sequence is Creatine kinase S-type, mitochondrial (419 aa).

Residues 1-39 (MASIFSKLLTGRNASLLFATMGTSVLTTGYLLNRQKVCA) constitute a mitochondrion transit peptide. Positions 40–64 (EVREQPRLFPPSADYPDLRKHNNCM) are cardiolipin-binding. The 87-residue stretch at 46–132 (RLFPPSADYP…FDPVIKLRHN (87 aa)) folds into the Phosphagen kinase N-terminal domain. The Phosphagen kinase C-terminal domain maps to 159–401 (YVLSSRVRTG…NYLVDCEKKL (243 aa)). Residues 162-166 (SSRVR) and His-225 each bind ATP. Tyr-255 is modified (phosphotyrosine). Residues Arg-270, Arg-326, 354–359 (RGTGGV), and Asp-369 contribute to the ATP site. Thr-356 carries the phosphothreonine modification.

Belongs to the ATP:guanido phosphotransferase family. Exists as an octamer composed of four CKMT2 homodimers. Sarcomere-specific. Found only in heart and skeletal muscles.

It is found in the mitochondrion inner membrane. The catalysed reaction is creatine + ATP = N-phosphocreatine + ADP + H(+). Reversibly catalyzes the transfer of phosphate between ATP and various phosphogens (e.g. creatine phosphate). Creatine kinase isoenzymes play a central role in energy transduction in tissues with large, fluctuating energy demands, such as skeletal muscle, heart, brain and spermatozoa. The chain is Creatine kinase S-type, mitochondrial (CKMT2) from Homo sapiens (Human).